Reading from the N-terminus, the 597-residue chain is Aspartate--tRNA(Asp/Asn) ligase (597 aa).

An L-aspartate-binding site is contributed by Glu-176. The segment at 200 to 203 is aspartate; sequence QQFK. Arg-222 and His-451 together coordinate L-aspartate. 222-224 contacts ATP; sequence RDE. ATP is bound at residue Glu-489. Arg-496 is an L-aspartate binding site. Residue 541-544 coordinates ATP; that stretch reads GIDR.

This sequence belongs to the class-II aminoacyl-tRNA synthetase family. Type 1 subfamily. In terms of assembly, homodimer.

The protein resides in the cytoplasm. It catalyses the reaction tRNA(Asx) + L-aspartate + ATP = L-aspartyl-tRNA(Asx) + AMP + diphosphate. Functionally, aspartyl-tRNA synthetase with relaxed tRNA specificity since it is able to aspartylate not only its cognate tRNA(Asp) but also tRNA(Asn). Reaction proceeds in two steps: L-aspartate is first activated by ATP to form Asp-AMP and then transferred to the acceptor end of tRNA(Asp/Asn). The sequence is that of Aspartate--tRNA(Asp/Asn) ligase from Orientia tsutsugamushi (strain Boryong) (Rickettsia tsutsugamushi).